The primary structure comprises 82 residues: Sulfur carrier protein TusA (82 aa).

The active-site Cysteine persulfide intermediate is the cysteine 19.

The protein belongs to the sulfur carrier protein TusA family. As to quaternary structure, interacts with IscS.

It localises to the cytoplasm. The protein operates within tRNA modification. Sulfur carrier protein involved in sulfur trafficking in the cell. Part of a sulfur-relay system required for 2-thiolation during synthesis of 2-thiouridine of the modified wobble base 5-methylaminomethyl-2-thiouridine (mnm(5)s(2)U) in tRNA. Interacts with IscS and stimulates its cysteine desulfurase activity. Accepts an activated sulfur from IscS, which is then transferred to TusD, and thus determines the direction of sulfur flow from IscS to 2-thiouridine formation. Also appears to be involved in sulfur transfer for the biosynthesis of molybdopterin. This Edwardsiella ictaluri (strain 93-146) protein is Sulfur carrier protein TusA.